We begin with the raw amino-acid sequence, 60 residues long: Large ribosomal subunit protein uL30 (60 aa).

This sequence belongs to the universal ribosomal protein uL30 family. In terms of assembly, part of the 50S ribosomal subunit.

This is Large ribosomal subunit protein uL30 from Dechloromonas aromatica (strain RCB).